The primary structure comprises 735 residues: Diacylglycerol kinase alpha (735 aa).

2 consecutive EF-hand domains span residues 110 to 145 and 155 to 190; these read RPED…MMRV and ELRP…TVPL. Ca(2+) contacts are provided by Asp-123, Asp-125, Asn-127, Glu-134, Asp-168, Asp-170, Ser-172, Ser-174, and Glu-179. 2 consecutive Phorbol-ester/DAG-type zinc fingers follow at residues 205-253 and 269-319; these read QHMW…ALPC and SHVW…GHEC. The DAGKc domain occupies 372–506; it reads PNTHPLLVFV…MDRWSVEVIP (135 aa). The residue at position 484 (Lys-484) is an N6-acetyllysine.

Belongs to the eukaryotic diacylglycerol kinase family. As to quaternary structure, monomer. In terms of tissue distribution, expressed in lymphocytes.

The protein localises to the cytoplasm. Its subcellular location is the cytosol. It catalyses the reaction a 1,2-diacyl-sn-glycerol + ATP = a 1,2-diacyl-sn-glycero-3-phosphate + ADP + H(+). It carries out the reaction a 1-O-alkyl-sn-glycerol + ATP = a 1-O-alkyl-sn-glycero-3-phosphate + ADP + H(+). The enzyme catalyses 1-O-alkyl-2-acyl-sn-glycerol + ATP = 1-O-alkyl-2-acyl-sn-glycero-3-phosphate + ADP + H(+). The catalysed reaction is 1,2-dihexadecanoyl-sn-glycerol + ATP = 1,2-dihexadecanoyl-sn-glycero-3-phosphate + ADP + H(+). It catalyses the reaction 1-hexadecanoyl-2-(9Z-octadecenoyl)-sn-glycerol + ATP = 1-hexadecanoyl-2-(9Z-octadecenoyl)-sn-glycero-3-phosphate + ADP + H(+). It carries out the reaction 2-(9Z-octadecenoyl)-glycerol + ATP = 2-(9Z-octadecenoyl)-sn-glycero-3-phosphate + ADP + H(+). The enzyme catalyses 1,2-di-(9Z-octadecenoyl)-sn-glycerol + ATP = 1,2-di-(9Z-octadecenoyl)-sn-glycero-3-phosphate + ADP + H(+). The catalysed reaction is 1-octadecanoyl-2-(5Z,8Z,11Z,14Z-eicosatetraenoyl)-sn-glycerol + ATP = 1-octadecanoyl-2-(5Z,8Z,11Z,14Z-eicosatetraenoyl)-sn-glycero-3-phosphate + ADP + H(+). It catalyses the reaction 1,2-didecanoyl-sn-glycerol + ATP = 1,2-didecanoyl-sn-glycero-3-phosphate + ADP + H(+). It carries out the reaction 1-O-hexadecyl-2-acetyl-sn-glycerol + ATP = 1-O-hexadecyl-2-acetyl-sn-glycero-3-phosphate + ADP + H(+). The enzyme catalyses 1-O-hexadecyl-2-(5Z,8Z,11Z,14Z-eicosatetraenoyl)-sn-glycerol + ATP = 1-O-hexadecyl-2-(5Z,8Z,11Z,14Z-eicosatetraenoyl)-sn-glycero-3-phosphate + ADP + H(+). The catalysed reaction is 1-O-hexadecyl-2-(9Z-octadecenoyl)-sn-glycerol + ATP = 1-O-hexadecyl-2-(9Z-octadecenoyl)-sn-glycero-3-phosphate + ADP + H(+). It catalyses the reaction 1-O-hexadecyl-sn-glycerol + ATP = 1-O-hexadecyl-sn-glycero-3-phosphate + ADP + H(+). It functions in the pathway lipid metabolism; glycerolipid metabolism. Stimulated by calcium and phosphatidylserine. In terms of biological role, diacylglycerol kinase that converts diacylglycerol/DAG into phosphatidic acid/phosphatidate/PA and regulates the respective levels of these two bioactive lipids. Thereby, acts as a central switch between the signaling pathways activated by these second messengers with different cellular targets and opposite effects in numerous biological processes. Also plays an important role in the biosynthesis of complex lipids. Can also phosphorylate 1-alkyl-2-acylglycerol in vitro as efficiently as diacylglycerol provided it contains an arachidonoyl group. Also involved in the production of alkyl-lysophosphatidic acid, another bioactive lipid, through the phosphorylation of 1-alkyl-2-acetyl glycerol. This is Diacylglycerol kinase alpha (DGKA) from Homo sapiens (Human).